We begin with the raw amino-acid sequence, 248 residues long: Ubiquinone/menaquinone biosynthesis C-methyltransferase UbiE (248 aa).

S-adenosyl-L-methionine is bound by residues S68 and D92.

It belongs to the class I-like SAM-binding methyltransferase superfamily. MenG/UbiE family.

It catalyses the reaction a 2-demethylmenaquinol + S-adenosyl-L-methionine = a menaquinol + S-adenosyl-L-homocysteine + H(+). The catalysed reaction is a 2-methoxy-6-(all-trans-polyprenyl)benzene-1,4-diol + S-adenosyl-L-methionine = a 5-methoxy-2-methyl-3-(all-trans-polyprenyl)benzene-1,4-diol + S-adenosyl-L-homocysteine + H(+). It participates in quinol/quinone metabolism; menaquinone biosynthesis; menaquinol from 1,4-dihydroxy-2-naphthoate: step 2/2. Its pathway is cofactor biosynthesis; ubiquinone biosynthesis. Functionally, methyltransferase required for the conversion of demethylmenaquinol (DMKH2) to menaquinol (MKH2) and the conversion of 2-polyprenyl-6-methoxy-1,4-benzoquinol (DDMQH2) to 2-polyprenyl-3-methyl-6-methoxy-1,4-benzoquinol (DMQH2). The polypeptide is Ubiquinone/menaquinone biosynthesis C-methyltransferase UbiE (Rickettsia peacockii (strain Rustic)).